The chain runs to 226 residues: Large ribosomal subunit protein uL4 (226 aa).

The interval 47-74 (GTAKAKTRSEVSGGGRKPWPQKHTGRAR) is disordered.

Belongs to the universal ribosomal protein uL4 family. Part of the 50S ribosomal subunit.

In terms of biological role, one of the primary rRNA binding proteins, this protein initially binds near the 5'-end of the 23S rRNA. It is important during the early stages of 50S assembly. It makes multiple contacts with different domains of the 23S rRNA in the assembled 50S subunit and ribosome. Functionally, forms part of the polypeptide exit tunnel. This Kosmotoga olearia (strain ATCC BAA-1733 / DSM 21960 / TBF 19.5.1) protein is Large ribosomal subunit protein uL4.